The following is a 135-amino-acid chain: Probable disulfide formation protein (135 aa).

The helical transmembrane segment at 7 to 26 (SYCLYLAWLFSCIGTLMSVY) threads the bilayer. A disulfide bond links cysteine 36 and cysteine 39. The next 2 membrane-spanning stretches (helical) occupy residues 41 to 60 (YQRI…AYRE) and 67 to 84 (YTLP…YQVC). A disulfide bridge connects residues cysteine 96 and cysteine 101. A helical membrane pass occupies residues 109–131 (GFITMPMASAAAFCAIACLLVLA).

This sequence belongs to the DsbB family. BdbC subfamily.

It localises to the cell inner membrane. Functionally, required for disulfide bond formation in some proteins. The polypeptide is Probable disulfide formation protein (Chlamydia trachomatis serovar D (strain ATCC VR-885 / DSM 19411 / UW-3/Cx)).